Here is a 366-residue protein sequence, read N- to C-terminus: S-adenosylmethionine:tRNA ribosyltransferase-isomerase (366 aa).

It belongs to the QueA family. Monomer.

The protein resides in the cytoplasm. It carries out the reaction 7-aminomethyl-7-carbaguanosine(34) in tRNA + S-adenosyl-L-methionine = epoxyqueuosine(34) in tRNA + adenine + L-methionine + 2 H(+). The protein operates within tRNA modification; tRNA-queuosine biosynthesis. In terms of biological role, transfers and isomerizes the ribose moiety from AdoMet to the 7-aminomethyl group of 7-deazaguanine (preQ1-tRNA) to give epoxyqueuosine (oQ-tRNA). The protein is S-adenosylmethionine:tRNA ribosyltransferase-isomerase of Methylorubrum populi (strain ATCC BAA-705 / NCIMB 13946 / BJ001) (Methylobacterium populi).